A 325-amino-acid polypeptide reads, in one-letter code: Elongation factor P--(R)-beta-lysine ligase (325 aa).

Residue Ser-76–Glu-78 coordinates substrate. ATP-binding positions include Arg-100 to Glu-102 and Asn-109. Tyr-118 is a binding site for substrate. Glu-244 to Leu-245 is an ATP binding site. Residue Glu-251 coordinates substrate. Gly-300 provides a ligand contact to ATP.

It belongs to the class-II aminoacyl-tRNA synthetase family. EpmA subfamily. As to quaternary structure, homodimer.

The enzyme catalyses D-beta-lysine + L-lysyl-[protein] + ATP = N(6)-((3R)-3,6-diaminohexanoyl)-L-lysyl-[protein] + AMP + diphosphate + H(+). Its function is as follows. With EpmB is involved in the beta-lysylation step of the post-translational modification of translation elongation factor P (EF-P). Catalyzes the ATP-dependent activation of (R)-beta-lysine produced by EpmB, forming a lysyl-adenylate, from which the beta-lysyl moiety is then transferred to the epsilon-amino group of a conserved specific lysine residue in EF-P. The chain is Elongation factor P--(R)-beta-lysine ligase from Edwardsiella ictaluri (strain 93-146).